Consider the following 184-residue polypeptide: Large ribosomal subunit protein uL6 (184 aa).

The protein belongs to the universal ribosomal protein uL6 family. As to quaternary structure, part of the 50S ribosomal subunit.

Functionally, this protein binds to the 23S rRNA, and is important in its secondary structure. It is located near the subunit interface in the base of the L7/L12 stalk, and near the tRNA binding site of the peptidyltransferase center. The polypeptide is Large ribosomal subunit protein uL6 (Onion yellows phytoplasma (strain OY-M)).